Here is a 665-residue protein sequence, read N- to C-terminus: MTEKEKIRNEVFELQAKINEWDNAYYNLDAPLVEDAIYDREILKLKKLEEQYSSYFSFEELANSPTQKINAKSSDLFKKVTHDSPMLSLNKAYTEEEIQKFIDNIKKVTPTFSFFLEPKIDGLSISIKYRNGQLFQAVTRGDGLVGEDVTENIKQIKNIPKEIAYQKPLEVRGEVYLALSEFEKINLNFQKENKPLMANPRNAAAGTLRQLDKEIVANRNLSAFLYNIVAPEDHNIFTILEARDFLKNLGFSVTKEATYAKDLSEINSYIENFKHLKKTLDYETDGVVIKLNELQHYDALGATNKFPHSAIAFKYEPNTTTTVLKNIFITVGRTGLVTYNAELEPVILSGSCITFATLNNYQYIKDLKLNKGDLVYIKKAGEIIPCVIGLVNKKHEETEFNKFLKCPYCNSDLIETDTLLEQYCSNENCPEIRRKKIIHFASKKAMELNSLGEKNIDVFINEGLLENVIDFYKLKEKKDKIMSLERFGTKSVMNILKSIEESKKNSLDRVIFGLSIKHIGSKVAYFLASKILKLSNFLDFDFDSLISYNEIGEKIISSLKNWVAKEENKNLVKDLLDNDVDLEFIATKKTERFAQLSFVITGTLSQPRSHFEKLIKENGGSISSAVSAKTSYLLVGEDAGSKLAKARALNVKILDEEAFNELLVS.

Residues 35 to 39 (DAIYD), 88 to 89 (SL), and glutamate 117 each bind NAD(+). The N6-AMP-lysine intermediate role is filled by lysine 119. NAD(+) contacts are provided by arginine 140, glutamate 174, lysine 290, and lysine 314. Residues cysteine 406, cysteine 409, cysteine 424, and cysteine 429 each contribute to the Zn(2+) site. One can recognise a BRCT domain in the interval 588–665 (KKTERFAQLS…EEAFNELLVS (78 aa)).

The protein belongs to the NAD-dependent DNA ligase family. LigA subfamily. It depends on Mg(2+) as a cofactor. Requires Mn(2+) as cofactor.

The catalysed reaction is NAD(+) + (deoxyribonucleotide)n-3'-hydroxyl + 5'-phospho-(deoxyribonucleotide)m = (deoxyribonucleotide)n+m + AMP + beta-nicotinamide D-nucleotide.. Functionally, DNA ligase that catalyzes the formation of phosphodiester linkages between 5'-phosphoryl and 3'-hydroxyl groups in double-stranded DNA using NAD as a coenzyme and as the energy source for the reaction. It is essential for DNA replication and repair of damaged DNA. This is DNA ligase from Metamycoplasma arthritidis (strain 158L3-1) (Mycoplasma arthritidis).